Reading from the N-terminus, the 174-residue chain is Anthrone oxygenase CPUR_05435 (174 aa).

A run of 4 helical transmembrane segments spans residues 13-33 (VALA…AIMI), 56-76 (YGSV…GFAS), 88-108 (CLAA…AMIP), and 140-160 (WVVL…MGFT).

This sequence belongs to the anthrone oxygenase family.

The protein localises to the membrane. The catalysed reaction is emodin anthrone + O2 = emodin + H2O + H(+). In terms of biological role, anthrone oxygenase; part of the ergochrome gene cluster responsible for the typical purple-black color of the ergot sclerotia. The ergochrome gene cluster produces several ergot pigments including the yellow ergochrome secalonic acid and its derivatives, as well as the red anthraquinones endocrocin and clavorubin. The pathway begins with the synthesis of atrochrysone thioester by the polyketide synthase (PKS) CPUR_05437. The atrochrysone carboxyl ACP thioesterase CPUR_05436 then breaks the thioester bond and releases the atrochrysone carboxylic acid from CPUR_05437. The decarboxylase CPUR_05434 then catalyzes the concerted decarboxylation-elimination required to convert atochrysone carboxylic acid into emodin anthrone, which is further oxidized to emodin by the anthrone oxygenase CPUR_05435. Emodin is further modified to yield monodictyphenone via several steps involving CPUR_05427, CPUR_05428, CPUR_05429 and CPUR_05430. The short chain dehydrogenase/reductase CPUR_05418 then catalyzes the C-5 ketoreduction to give the xanthone skeleton of the monomeric units. Ergochromes formation requires further dimerization steps of different xanthone units, probably catalyzed by the cytochrome P450 monooxygenase CPUR_05419. CPUR_05425, CPUR_05426 and CPUR_05431 are unique to Claviceps, thus it is likely that they are involved in further modification of xanthone units or in their dimerization. The yellow ergochromes and the red anthraquinone pigments endocrocin and clavorubin are products from the same PKS derived precursors and the latter are likely shunt products in the pathway of xanthone biosynthesis. It is proposed that atrochrysone carboxylic acid released from the PKS CPUR_05437 can also be converted to endocrocin anthrone which is further oxidized into endocrocin by CPUR_05435. Endocrocin could be then modified to clavorubin, possibly by CPUR_05423 and CPUR_05431. Clavorubin is the principal anthraquinone metabolite produced by the cluster with a much higher yield compared to endocrocin. The chain is Anthrone oxygenase CPUR_05435 from Claviceps purpurea (strain 20.1) (Ergot fungus).